The chain runs to 478 residues: Phosphomannomutase (478 aa).

The helical transmembrane segment at 30-46 (FTPEVCARFTISFLTVM) threads the bilayer. The active-site Phosphoserine intermediate is Ser-111. 4 residues coordinate Mg(2+): Ser-111, Asp-245, Asp-247, and Asp-249. The chain crosses the membrane as a helical span at residues 265-284 (ILGLLCSLELAADAVAIPVS).

This sequence belongs to the phosphohexose mutase family. The cofactor is Mg(2+).

Its subcellular location is the cell membrane. The enzyme catalyses alpha-D-mannose 1-phosphate = D-mannose 6-phosphate. It participates in nucleotide-sugar biosynthesis; GDP-alpha-D-mannose biosynthesis; alpha-D-mannose 1-phosphate from D-fructose 6-phosphate: step 2/2. Its pathway is bacterial outer membrane biogenesis; LPS O-antigen biosynthesis. Its function is as follows. Involved in GDP-mannose biosynthesis which serves as the activated sugar nucleotide precursor for mannose residues in cell surface polysaccharides. This enzyme participates in synthesis of the LPS group C2 O antigen. This Salmonella muenchen protein is Phosphomannomutase (manB).